The chain runs to 257 residues: uncharacterized protein (257 aa).

Residues N61, N95, N102, N111, N139, N148, and N152 are each glycosylated (N-linked (GlcNAc...) asparagine; by host). Residues W233–I253 form a helical membrane-spanning segment.

Its subcellular location is the host membrane. It is found in the virion. This is an uncharacterized protein from Acanthamoeba polyphaga (Amoeba).